The sequence spans 596 residues: Leucine-rich repeat and IQ domain-containing protein 4 (596 aa).

22 LRR repeats span residues 22–44 (LPRL…LLRQ), 59–83 (LTDR…ILAL), 84–106 (KELE…IQQL), 108–129 (NTKV…LGAL), 130–152 (SSLE…VVSR), 153–176 (LRTL…ICKS), 177–200 (LHHL…IVNQ), 202–223 (KLRE…LCVL), 224–246 (YNLE…IGHL), 248–269 (RLQK…LSQC), 270–293 (SKLS…ELLT), 295–315 (LTEV…LCSW), 317–337 (SLHL…SFKR), 338–361 (LINL…ICAL), 362–384 (KNLE…ISLL), 385–407 (SNLK…IFSL), 410–433 (LEKL…IKRL), 434–457 (MNLK…GLMP), 459–479 (LEVL…ICRT), 480–502 (RNLR…LDHL), 504–525 (NLKV…VCNQ), and 527–549 (NEAI…TIQA). An IQ domain is found at 540–569 (RKMMATTIQAWWRGIMVRKGYGSYEELLKA). Basic residues predominate over residues 569 to 587 (ARKKGKSPPKDKKGKKAAK). A disordered region spans residues 569-596 (ARKKGKSPPKDKKGKKAAKGKPEKGNKK).

This Mus musculus (Mouse) protein is Leucine-rich repeat and IQ domain-containing protein 4 (Lrriq4).